Reading from the N-terminus, the 269-residue chain is BAG family molecular chaperone regulator 4 (269 aa).

The interval 1-40 (MMHNSTEESEWEVRPGGMLVQRRDDAASSDHKPLQDPDSA) is disordered. Residues 21-35 (QRRDDAASSDHKPLQ) are compositionally biased toward basic and acidic residues. The 77-residue stretch at 46-122 (QTIRITVSHG…LVVVVEDTNK (77 aa)) folds into the Ubiquitin-like domain. The 82-residue stretch at 138-219 (AIAAVNAVTG…NLQEAVDKLK (82 aa)) folds into the BAG domain. Residues 241 to 269 (SFGNGVGSLNPPPPASPSANVTQDWEKFD) form a disordered region.

Binds to the ATPase domain of HSP70/HSC70 chaperones. Interacts with HSP70-1. In terms of tissue distribution, detected in stems, leaves, flowers and roots.

Functionally, co-chaperone that regulates diverse cellular pathways, such as programmed cell death and stress responses. The protein is BAG family molecular chaperone regulator 4 (BAG4) of Arabidopsis thaliana (Mouse-ear cress).